The following is a 161-amino-acid chain: Nucleotide-binding protein ABO_0048 (161 aa).

The protein belongs to the YajQ family.

Nucleotide-binding protein. The chain is Nucleotide-binding protein ABO_0048 from Alcanivorax borkumensis (strain ATCC 700651 / DSM 11573 / NCIMB 13689 / SK2).